The chain runs to 338 residues: Heat-inducible transcription repressor HrcA (338 aa).

This sequence belongs to the HrcA family.

Negative regulator of class I heat shock genes (grpE-dnaK-dnaJ and groELS operons). Prevents heat-shock induction of these operons. The protein is Heat-inducible transcription repressor HrcA of Streptomyces avermitilis (strain ATCC 31267 / DSM 46492 / JCM 5070 / NBRC 14893 / NCIMB 12804 / NRRL 8165 / MA-4680).